The primary structure comprises 349 residues: Phosphoribosylformylglycinamidine cyclo-ligase (349 aa).

It belongs to the AIR synthase family.

The protein localises to the cytoplasm. It carries out the reaction 2-formamido-N(1)-(5-O-phospho-beta-D-ribosyl)acetamidine + ATP = 5-amino-1-(5-phospho-beta-D-ribosyl)imidazole + ADP + phosphate + H(+). Its pathway is purine metabolism; IMP biosynthesis via de novo pathway; 5-amino-1-(5-phospho-D-ribosyl)imidazole from N(2)-formyl-N(1)-(5-phospho-D-ribosyl)glycinamide: step 2/2. The chain is Phosphoribosylformylglycinamidine cyclo-ligase from Bordetella parapertussis (strain 12822 / ATCC BAA-587 / NCTC 13253).